The sequence spans 278 residues: Putative ABC transporter ATP-binding protein MJ1572 (278 aa).

One can recognise an ABC transporter domain in the interval 5 to 242 (YRLVDVSYKY…LDELNLDVPE (238 aa)). 38 to 45 (GPNGAGKT) provides a ligand contact to ATP.

It belongs to the ABC transporter superfamily.

It is found in the cell membrane. Its function is as follows. Probably part of an ABC transporter complex. Responsible for energy coupling to the transport system. The protein is Putative ABC transporter ATP-binding protein MJ1572 of Methanocaldococcus jannaschii (strain ATCC 43067 / DSM 2661 / JAL-1 / JCM 10045 / NBRC 100440) (Methanococcus jannaschii).